A 126-amino-acid chain; its full sequence is Profilin (126 aa).

Belongs to the profilin family. As to quaternary structure, occurs in many kinds of cells as a complex with monomeric actin in a 1:1 ratio.

It is found in the cytoplasm. The protein localises to the cytoskeleton. Functionally, binds to actin and affects the structure of the cytoskeleton. At high concentrations, profilin prevents the polymerization of actin, whereas it enhances it at low concentrations. By binding to PIP2, it inhibits the formation of IP3 and DG. The protein is Profilin of Bombyx mori (Silk moth).